Reading from the N-terminus, the 97-residue chain is SAGA-associated factor 11 (97 aa).

Residues 70-91 (IECNVCGREVSGNRFAAHLVRC) form an SGF11-type zinc finger.

The protein belongs to the SGF11 family. Component of the 1.8 MDa SAGA transcription coactivator-HAT complex. SAGA is built of 5 distinct domains with specialized functions. Within the SAGA complex, SUS1, SGF11, SGF73 and UBP8 form an additional subcomplex of SAGA called the DUB module (deubiquitination module). Interacts directly with SGF73, SUS1 and UBP8.

The protein resides in the nucleus. Functionally, functions as a component of the transcription regulatory histone acetylation (HAT) complex SAGA. At the promoters, SAGA is required for recruitment of the basal transcription machinery. It influences RNA polymerase II transcriptional activity through different activities such as TBP interaction and promoter selectivity, interaction with transcription activators, and chromatin modification through histone acetylation and deubiquitination. SAGA acetylates nucleosomal histone H3 to some extent (to form H3K9ac, H3K14ac, H3K18ac and H3K23ac). SAGA interacts with DNA via upstream activating sequences (UASs). Involved in transcriptional regulation of a subset of SAGA-regulated genes. Within the SAGA complex, participates in a subcomplex, that specifically deubiquitinates histones H2B. The protein is SAGA-associated factor 11 of Kluyveromyces lactis (strain ATCC 8585 / CBS 2359 / DSM 70799 / NBRC 1267 / NRRL Y-1140 / WM37) (Yeast).